The following is a 481-amino-acid chain: UDP-N-acetylmuramoyl-L-alanyl-D-glutamate--L-lysine ligase (481 aa).

Ser42 serves as a coordination point for UDP-N-acetyl-alpha-D-muramoyl-L-alanyl-D-glutamate. Residue 118-124 (GTKGKTT) participates in ATP binding. UDP-N-acetyl-alpha-D-muramoyl-L-alanyl-D-glutamate contacts are provided by residues Gln158, 160–161 (TT), Ser187, and Arg195. N6-carboxylysine is present on Lys229. The short motif at 404 to 407 (DDPN) is the L-lysine recognition motif element.

Belongs to the MurCDEF family. MurE subfamily. In terms of processing, carboxylation is probably crucial for Mg(2+) binding and, consequently, for the gamma-phosphate positioning of ATP.

Its subcellular location is the cytoplasm. It carries out the reaction UDP-N-acetyl-alpha-D-muramoyl-L-alanyl-D-glutamate + L-lysine + ATP = UDP-N-acetyl-alpha-D-muramoyl-L-alanyl-gamma-D-glutamyl-L-lysine + ADP + phosphate + H(+). The protein operates within cell wall biogenesis; peptidoglycan biosynthesis. Its function is as follows. Catalyzes the addition of L-lysine to the nucleotide precursor UDP-N-acetylmuramoyl-L-alanyl-D-glutamate (UMAG) in the biosynthesis of bacterial cell-wall peptidoglycan. This is UDP-N-acetylmuramoyl-L-alanyl-D-glutamate--L-lysine ligase from Streptococcus pyogenes serotype M28 (strain MGAS6180).